The primary structure comprises 347 residues: NADH-quinone oxidoreductase subunit H (347 aa).

Transmembrane regions (helical) follow at residues 13 to 33 (LIIALKSVVLLVVLLIVVAYL), 50 to 70 (PNVVGPWGLFQAFADLLKFVF), 82 to 102 (GVFLLAPFISAVLAMATWAVI), 115 to 135 (VGILYIFAISSLEVYGVIMGG), 161 to 181 (IGFVIVTVLLTVGSLNLTDIV), 198 to 218 (FLDWNWLCLFPMFVVFFISAL), 248 to 268 (FLLFFLGEYVAITLMCALMTV), 286 to 306 (VPGIIWFMLKLCFCFFLFAMV), and 325 to 345 (VFLPISLFMVVATATFLKVFG).

It belongs to the complex I subunit 1 family. NDH-1 is composed of 14 different subunits. Subunits NuoA, H, J, K, L, M, N constitute the membrane sector of the complex.

The protein localises to the cell inner membrane. It carries out the reaction a quinone + NADH + 5 H(+)(in) = a quinol + NAD(+) + 4 H(+)(out). Functionally, NDH-1 shuttles electrons from NADH, via FMN and iron-sulfur (Fe-S) centers, to quinones in the respiratory chain. The immediate electron acceptor for the enzyme in this species is believed to be ubiquinone. Couples the redox reaction to proton translocation (for every two electrons transferred, four hydrogen ions are translocated across the cytoplasmic membrane), and thus conserves the redox energy in a proton gradient. This subunit may bind ubiquinone. The protein is NADH-quinone oxidoreductase subunit H of Brucella ovis (strain ATCC 25840 / 63/290 / NCTC 10512).